A 286-amino-acid chain; its full sequence is Foldase protein PrsA 1 (286 aa).

Residues 1–18 form the signal peptide; it reads MKKAMLALAATSVIALSA. Cys-19 carries the N-palmitoyl cysteine lipid modification. Residue Cys-19 is the site of S-diacylglycerol cysteine attachment. Residues 130 to 220 enclose the PpiC domain; sequence KPEIKASHIL…FGYHIIKVTD (91 aa).

It belongs to the PrsA family.

Its subcellular location is the cell membrane. The enzyme catalyses [protein]-peptidylproline (omega=180) = [protein]-peptidylproline (omega=0). Functionally, plays a major role in protein secretion by helping the post-translocational extracellular folding of several secreted proteins. This chain is Foldase protein PrsA 1 (prsA1), found in Bacillus cereus (strain ATCC 14579 / DSM 31 / CCUG 7414 / JCM 2152 / NBRC 15305 / NCIMB 9373 / NCTC 2599 / NRRL B-3711).